A 901-amino-acid polypeptide reads, in one-letter code: Probable inorganic carbon transporter subunit DabA (901 aa).

Zn(2+) is bound by residues Cys424, Asp426, His606, and Cys621.

Belongs to the inorganic carbon transporter (TC 9.A.2) DabA family. As to quaternary structure, forms a complex with DabB. Requires Zn(2+) as cofactor.

The protein resides in the cell membrane. In terms of biological role, part of an energy-coupled inorganic carbon pump. The chain is Probable inorganic carbon transporter subunit DabA from Staphylococcus aureus (strain USA300).